Here is a 330-residue protein sequence, read N- to C-terminus: Olfactory receptor 1P1 (330 aa).

At 1-39 (MGLTQDFFPPTSELLEGGNQTSTFEFLLWGLSDQPQQQH) the chain is on the extracellular side. A glycan (N-linked (GlcNAc...) asparagine) is linked at asparagine 19. Residues 40-60 (IFFLLFLWMYVVTVAGNLLIV) traverse the membrane as a helical segment. The Cytoplasmic segment spans residues 61-71 (LAIGTDTHLHT). The helical transmembrane segment at 72–92 (PMYFFLASLSCADIFSTSTTV) threads the bilayer. Topologically, residues 93–111 (PKALVNIQTQSRSISYAGC) are extracellular. An intrachain disulfide couples cysteine 111 to cysteine 192. The helical transmembrane segment at 112-132 (LAQLYFFLTFGDMDIFLPATM) threads the bilayer. At 133–137 (AYDRY) the chain is on the cytoplasmic side. The helical transmembrane segment at 138–158 (VAICHLLHYMMIMSLHRCAFL) threads the bilayer. Over 159-209 (VTACWTLTSLLAMTRTFLIFRLSLCSKILPGFFCDLGPLMKVSCSDAQVNE) the chain is Extracellular. Residues 210 to 230 (LVLLFLGGAVILIPFMLILVS) form a helical membrane-spanning segment. At 231–257 (YIRIVSAILRAPSAQGRRKAFSTCDSH) the chain is on the cytoplasmic side. The chain crosses the membrane as a helical span at residues 258 to 278 (LVVVALFFGTVIRAYLCPSSS). Residues 279 to 286 (SSNSVKED) lie on the Extracellular side of the membrane. The helical transmembrane segment at 287 to 307 (TAAAVMYTVVTPLLNPFIYSM) threads the bilayer. Residues 308–330 (RNKDMKAAVVRLLKGRVSFSQGQ) lie on the Cytoplasmic side of the membrane.

Belongs to the G-protein coupled receptor 1 family.

Its subcellular location is the cell membrane. In terms of biological role, odorant receptor. The polypeptide is Olfactory receptor 1P1 (OR1P1) (Homo sapiens (Human)).